We begin with the raw amino-acid sequence, 510 residues long: Probable malate:quinone oxidoreductase (510 aa).

This sequence belongs to the MQO family. It depends on FAD as a cofactor.

It catalyses the reaction (S)-malate + a quinone = a quinol + oxaloacetate. It participates in carbohydrate metabolism; tricarboxylic acid cycle; oxaloacetate from (S)-malate (quinone route): step 1/1. This chain is Probable malate:quinone oxidoreductase, found in Wigglesworthia glossinidia brevipalpis.